A 199-amino-acid polypeptide reads, in one-letter code: Recombination protein RecR (199 aa).

The segment at 58–73 (CKKCFNLTSEEECEIC) adopts a C4-type zinc-finger fold. Residues 81 to 175 (KIICVVAETK…KVTRIAYGLP (95 aa)) form the Toprim domain.

It belongs to the RecR family.

Functionally, may play a role in DNA repair. It seems to be involved in an RecBC-independent recombinational process of DNA repair. It may act with RecF and RecO. In Prochlorococcus marinus subsp. pastoris (strain CCMP1986 / NIES-2087 / MED4), this protein is Recombination protein RecR.